The following is a 62-amino-acid chain: Rubredoxin-2 (62 aa).

Residues methionine 7–leucine 58 form the Rubredoxin-like domain. Cysteine 10, cysteine 15, cysteine 45, and cysteine 48 together coordinate Fe cation.

Belongs to the rubredoxin family. Monomer. The cofactor is Fe(3+).

Rubredoxin is a small nonheme, iron protein lacking acid-labile sulfide. Its single Fe, chelated to 4 Cys, functions as an electron acceptor and may also stabilize the conformation of the molecule. This chain is Rubredoxin-2 (rd2), found in Desulfovibrio desulfuricans (strain ATCC 27774 / DSM 6949 / MB).